Reading from the N-terminus, the 139-residue chain is Endoribonuclease YbeY (139 aa).

Zn(2+)-binding residues include histidine 107, histidine 111, and aspartate 117.

The protein belongs to the endoribonuclease YbeY family. Zn(2+) is required as a cofactor.

Its subcellular location is the cytoplasm. In terms of biological role, single strand-specific metallo-endoribonuclease involved in late-stage 70S ribosome quality control and in maturation of the 3' terminus of the 16S rRNA. This chain is Endoribonuclease YbeY, found in Azobacteroides pseudotrichonymphae genomovar. CFP2.